A 253-amino-acid polypeptide reads, in one-letter code: 5'-nucleotidase SurE (253 aa).

A divalent metal cation is bound by residues Asp-8, Asp-9, Ser-39, and Asn-92.

Belongs to the SurE nucleotidase family. The cofactor is a divalent metal cation.

The protein localises to the cytoplasm. It carries out the reaction a ribonucleoside 5'-phosphate + H2O = a ribonucleoside + phosphate. Nucleotidase that shows phosphatase activity on nucleoside 5'-monophosphates. This is 5'-nucleotidase SurE from Burkholderia thailandensis (strain ATCC 700388 / DSM 13276 / CCUG 48851 / CIP 106301 / E264).